Reading from the N-terminus, the 442-residue chain is tRNA-2-methylthio-N(6)-dimethylallyladenosine synthase (442 aa).

Positions 2–120 (KKVFIRTFGC…LPKMIVDKET (119 aa)) constitute an MTTase N-terminal domain. Positions 11, 49, 83, 157, 161, and 164 each coordinate [4Fe-4S] cluster. In terms of domain architecture, Radical SAM core spans 143–375 (RVEGGAAFVS…NEVIEAETAR (233 aa)). Residues 378-441 (QTMIGTVQRC…TFSLRGKIVE (64 aa)) form the TRAM domain.

Belongs to the methylthiotransferase family. MiaB subfamily. As to quaternary structure, monomer. The cofactor is [4Fe-4S] cluster.

The protein localises to the cytoplasm. It catalyses the reaction N(6)-dimethylallyladenosine(37) in tRNA + (sulfur carrier)-SH + AH2 + 2 S-adenosyl-L-methionine = 2-methylsulfanyl-N(6)-dimethylallyladenosine(37) in tRNA + (sulfur carrier)-H + 5'-deoxyadenosine + L-methionine + A + S-adenosyl-L-homocysteine + 2 H(+). Catalyzes the methylthiolation of N6-(dimethylallyl)adenosine (i(6)A), leading to the formation of 2-methylthio-N6-(dimethylallyl)adenosine (ms(2)i(6)A) at position 37 in tRNAs that read codons beginning with uridine. The protein is tRNA-2-methylthio-N(6)-dimethylallyladenosine synthase of Neisseria meningitidis serogroup A / serotype 4A (strain DSM 15465 / Z2491).